The chain runs to 225 residues: Chromosome partition protein MukE (225 aa).

Residues 197–225 (RDGEAMPIENHLQLNDETEESQPDSGEEE) are disordered. Residues 212–225 (DETEESQPDSGEEE) are compositionally biased toward acidic residues.

The protein belongs to the MukE family. Interacts, and probably forms a ternary complex, with MukF and MukB. The complex formation is stimulated by calcium or magnesium.

The protein resides in the cytoplasm. It is found in the nucleoid. Involved in chromosome condensation, segregation and cell cycle progression. May participate in facilitating chromosome segregation by condensation DNA from both sides of a centrally located replisome during cell division. Probably acts via its interaction with MukB and MukF. The protein is Chromosome partition protein MukE of Salmonella typhi.